A 135-amino-acid chain; its full sequence is ATP synthase epsilon chain (135 aa).

The protein belongs to the ATPase epsilon chain family. As to quaternary structure, F-type ATPases have 2 components, CF(1) - the catalytic core - and CF(0) - the membrane proton channel. CF(1) has five subunits: alpha(3), beta(3), gamma(1), delta(1), epsilon(1). CF(0) has three main subunits: a, b and c.

It is found in the cell inner membrane. Its function is as follows. Produces ATP from ADP in the presence of a proton gradient across the membrane. The sequence is that of ATP synthase epsilon chain from Bradyrhizobium sp. (strain BTAi1 / ATCC BAA-1182).